We begin with the raw amino-acid sequence, 370 residues long: 3-dehydroquinate synthase (370 aa).

Residues 112-116 (GVIGD), 136-137 (TT), Lys-149, Lys-158, and 176-179 (TLAT) each bind NAD(+). Positions 191, 254, and 276 each coordinate Zn(2+).

Belongs to the sugar phosphate cyclases superfamily. Dehydroquinate synthase family. Co(2+) is required as a cofactor. The cofactor is Zn(2+). It depends on NAD(+) as a cofactor.

The protein localises to the cytoplasm. The catalysed reaction is 7-phospho-2-dehydro-3-deoxy-D-arabino-heptonate = 3-dehydroquinate + phosphate. It participates in metabolic intermediate biosynthesis; chorismate biosynthesis; chorismate from D-erythrose 4-phosphate and phosphoenolpyruvate: step 2/7. Functionally, catalyzes the conversion of 3-deoxy-D-arabino-heptulosonate 7-phosphate (DAHP) to dehydroquinate (DHQ). This is 3-dehydroquinate synthase from Xylella fastidiosa (strain M23).